The chain runs to 342 residues: MAIERRRFLQAAGVGAVLGLSGCTGNTSPPQANNETAEGSGGSESGDGSTQELTLATTTSTYDTGLLDALNPVFEEKFNARVKTISQGTGAAIETARNGDADVILVHARGAEDEFLQDGYGVNRRDVMFNDFVVVGPADDPAGISGMESAADAFATVADAGATFVSRGDDSGTNKKELLIWEAAGVEPSGTWYREIGKGMGDTLVQADQSGAYTLSDRGTFLATQDNIDLEIQVQGPLKGGPTILKNPYGVIPVNPAKYPDVNYSLAMAYAGFLTSPEGQEIISNYTANGSQLFFPNALSENPQFGQYVPVNYDGGENASSSASVSDAQFESWVAQHVPEDF.

A signal peptide (tat-type signal) is located at residues 1–32 (MAIERRRFLQAAGVGAVLGLSGCTGNTSPPQA). The segment covering 24–37 (TGNTSPPQANNETA) has biased composition (polar residues). The interval 24–52 (TGNTSPPQANNETAEGSGGSESGDGSTQE) is disordered.

As to quaternary structure, the complex is composed of two ATP-binding proteins (HVO_1886), two transmembrane proteins (HVO_1887) and a solute-binding protein (HVO_1888). Predicted to be exported by the Tat system. The position of the signal peptide cleavage has not been experimentally proven.

Part of an ABC transporter complex involved in anions import. The polypeptide is Putative ABC transporter anion-binding protein HVO_1888 (Haloferax volcanii (strain ATCC 29605 / DSM 3757 / JCM 8879 / NBRC 14742 / NCIMB 2012 / VKM B-1768 / DS2) (Halobacterium volcanii)).